A 338-amino-acid polypeptide reads, in one-letter code: RNA 3'-terminal phosphate cyclase (338 aa).

Residues Q103 and 283–287 (YLADQ) contribute to the ATP site. H308 acts as the Tele-AMP-histidine intermediate in catalysis.

It belongs to the RNA 3'-terminal cyclase family. Type 1 subfamily.

It localises to the cytoplasm. It carries out the reaction a 3'-end 3'-phospho-ribonucleotide-RNA + ATP = a 3'-end 2',3'-cyclophospho-ribonucleotide-RNA + AMP + diphosphate. Catalyzes the conversion of 3'-phosphate to a 2',3'-cyclic phosphodiester at the end of RNA. The mechanism of action of the enzyme occurs in 3 steps: (A) adenylation of the enzyme by ATP; (B) transfer of adenylate to an RNA-N3'P to produce RNA-N3'PP5'A; (C) and attack of the adjacent 2'-hydroxyl on the 3'-phosphorus in the diester linkage to produce the cyclic end product. The biological role of this enzyme is unknown but it is likely to function in some aspects of cellular RNA processing. This Shigella sonnei (strain Ss046) protein is RNA 3'-terminal phosphate cyclase.